Reading from the N-terminus, the 210-residue chain is MGQGQSVILSFEDGARTVELARESVEAFVQNGQREQPGSMRDAFYNRTSAFVRLESTRGRGRLRGCAGAHGSIHELGNHDQQLGHAIVEAAIEAASEASCGSEVEDAELPNIRVSVCTVSNLVLTDDPIEDIELGVHGVAIDGDGQHGWMYPTLPVENDWSVFEYLDRTCRKANLPDGAWQDEDVMVTLFEGQVFRETGDEDDPVEELTA.

Residues E12–E206 form the AMMECR1 domain.

This Halobacterium salinarum (strain ATCC 700922 / JCM 11081 / NRC-1) (Halobacterium halobium) protein is Protein VNG_2543C.